The sequence spans 2124 residues: Genome polyprotein (2124 aa).

Residue Gly-2 is the site of N-myristoyl glycine; by host attachment. A host EIF4E binding region spans residues 873 to 880 (VARDLLLI). Positions 1102–1264 (VQIATYFRNF…SAATKNGKLD (163 aa)) constitute an SF3 helicase domain. 1130 to 1137 (GKPGVGKS) contributes to the ATP binding site. Residues 1415-1437 (DKPKEEEEEPEEKKEKKTEESKE) are compositionally biased toward basic and acidic residues. The tract at residues 1415–1446 (DKPKEEEEEPEEKKEKKTEESKEAAGPYNGPT) is disordered. Position 1442 is an O-(5'-phospho-RNA)-tyrosine (Tyr-1442). One can recognise a Peptidase C3 domain in the interval 1459-1648 (SPLMDMEKKI…VGTRLTARMI (190 aa)). Residues His-1501, Asp-1535, and Cys-1612 each act as for protease 3C activity in the active site. The RdRp catalytic domain maps to 1893 to 2011 (PYLYDFDYSN…ASKFELDLVM (119 aa)). Catalysis depends on for RdRp activity residues Asp-1899 and Asp-1997.

This sequence belongs to the picornaviruses polyprotein family. As to quaternary structure, interacts with host EIF4E. Interacts with host IFIH1/MDA5; this interaction inhibits the induction of the IFN-beta signal pathway. Specific enzymatic cleavages by the viral protease in vivo yield a variety of precursors and mature proteins. The polyprotein seems to be cotranslationally cleaved at the 2A/2B junction by a ribosomal skip from one codon to the next without formation of a peptide bond. This process would release the P1-2A peptide from the translational complex. Post-translationally, during virion maturation, immature virions are rendered infectious following cleavage of VP0 into VP4 and VP2. This maturation seems to be an autocatalytic event triggered by the presence of RNA in the capsid and is followed by a conformational change of the particle. In terms of processing, myristoylation is required during RNA encapsidation and formation of the mature virus particle. Uridylylated by the polymerase and is covalently linked to the 5'-end of genomic RNA. This uridylylated form acts as a nucleotide-peptide primer for the polymerase.

The protein resides in the virion. The protein localises to the host cytoplasm. Its subcellular location is the host nucleus. It is found in the host nucleolus. It localises to the host cytoplasmic vesicle membrane. The catalysed reaction is RNA(n) + a ribonucleoside 5'-triphosphate = RNA(n+1) + diphosphate. It carries out the reaction ATP + H2O = ADP + phosphate + H(+). The enzyme catalyses Selective cleavage of Gln-|-Gly bond in the poliovirus polyprotein. In other picornavirus reactions Glu may be substituted for Gln, and Ser or Thr for Gly.. Its function is as follows. Forms an icosahedral capsid of pseudo T=3 symmetry with capsid proteins VP2 and VP3. Together they form an icosahedral capsid composed of 60 copies of each VP1, VP2, and VP3, with a diameter of approximately 300 Angstroms. VP4 lies on the inner surface of the protein shell formed by VP1, VP2 and VP3. All the three latter proteins contain a beta-sheet structure called beta-barrel jelly roll. VP1 is situated at the 12 fivefold axes, whereas VP2 and VP3 are located at the quasi-sixfold axes. In terms of biological role, lies on the inner surface of the capsid shell. After binding to the host receptor, the capsid undergoes conformational changes. Capsid protein VP4 is released, capsid protein VP1 N-terminus is externalized, and together, they shape a pore in the host membrane through which the viral genome is translocated into the host cell cytoplasm. After genome has been released, the channel shrinks. Functionally, VP0 precursor is a component of immature procapsids. Involved in host translation shutoff by inhibiting cap-dependent mRNA translation. Nuclear localization is required for this function. The resulting inhibition of cellular protein synthesis serves to ensure maximal viral gene expression and to evade host immune response. Its function is as follows. Affects membrane integrity and causes an increase in membrane permeability. In terms of biological role, associates with and induces structural rearrangements of intracellular membranes. It displays RNA-binding, nucleotide binding and NTPase activities. Interacts with IFIH1/MDA5 to inhibit the induction of the IFN-beta signal pathway. Functionally, serves as membrane anchor via its hydrophobic domain. Forms a primer, VPg-pU, which is utilized by the polymerase for the initiation of RNA chains. Its function is as follows. Cysteine protease that generates mature viral proteins from the precursor polyprotein. In addition to its proteolytic activity, it binds to viral RNA, and thus influences viral genome replication. RNA and substrate cooperatively bind to the protease. Cleaves host PABP1, this cleavage is important for viral replication. Cleaves host TANK and disrupts the TANK-TBK1-IKKepsilon-IRF3 complex, thereby inhibiting the induction of the IFN-beta signal pathway. In terms of biological role, replicates the genomic and antigenomic RNAs by recognizing replications specific signals. Performs VPg uridylylation. In Cosavirus A (isolate Human/Pakistan/0553/-) (HCoSV-A), this protein is Genome polyprotein.